The following is a 327-amino-acid chain: Methionyl-tRNA formyltransferase (327 aa).

121-124 is a (6S)-5,6,7,8-tetrahydrofolate binding site; that stretch reads SLLP.

The protein belongs to the Fmt family.

The catalysed reaction is L-methionyl-tRNA(fMet) + (6R)-10-formyltetrahydrofolate = N-formyl-L-methionyl-tRNA(fMet) + (6S)-5,6,7,8-tetrahydrofolate + H(+). Functionally, attaches a formyl group to the free amino group of methionyl-tRNA(fMet). The formyl group appears to play a dual role in the initiator identity of N-formylmethionyl-tRNA by promoting its recognition by IF2 and preventing the misappropriation of this tRNA by the elongation apparatus. The sequence is that of Methionyl-tRNA formyltransferase from Burkholderia pseudomallei (strain 1106a).